The primary structure comprises 644 residues: Protein lin-9 (644 aa).

Positions 1-77 (MSSAVRSPRK…GRDSPSVNSL (77 aa)) are disordered. Residues 50–62 (SIKRTGSPKKSPA) are compositionally biased toward basic residues.

This sequence belongs to the lin-9 family. In terms of assembly, component of the DRM complex, at least composed of lin-9, lin-35, lin-37, lin-52, lin-53, lin-54- dpl-1 and efl-1. Interacts with zft-11; the interaction is required to suppress the activation of non-neuronal genes in neurons.

The protein resides in the nucleus. In terms of biological role, synthetic multivulva class B (synMuvB) protein. SynMuvB proteins are required to repress the induction of vulval development by Ras signaling and probably act by forming the multiprotein DRM complex that represses transcription. Required for the development of sheath cells in the hermaphrodite gonad and for the development of the male spicule, rays and gonad. In association with the zinc finger protein ztf-11, negatively regulates the expression of non-neuronal genes during neurogenesis. In Caenorhabditis elegans, this protein is Protein lin-9.